A 137-amino-acid polypeptide reads, in one-letter code: Large ribosomal subunit protein uL16 (137 aa).

Belongs to the universal ribosomal protein uL16 family. Part of the 50S ribosomal subunit.

Functionally, binds 23S rRNA and is also seen to make contacts with the A and possibly P site tRNAs. In Halorhodospira halophila (strain DSM 244 / SL1) (Ectothiorhodospira halophila (strain DSM 244 / SL1)), this protein is Large ribosomal subunit protein uL16.